Consider the following 351-residue polypeptide: Rod outer segment membrane protein 1 (351 aa).

Topologically, residues 1–19 (MAPVLPLVLPLQPRIRLAQ) are cytoplasmic. The chain crosses the membrane as a helical span at residues 20-43 (GLWLLSWLLVLVGGLTLLCSGHLL). Residues 44–64 (VQLWHLGTFLAPSCPFSALPQ) lie on the Lumenal side of the membrane. A helical transmembrane segment spans residues 65–84 (VALAASAVALGTGLVGSGAS). Topologically, residues 85–102 (RASLDAEQYPPWRGVLGP) are cytoplasmic. Residues 103–125 (LLVAGTAGGGGLLVLALGLALAL) traverse the membrane as a helical segment. The Lumenal portion of the chain corresponds to 126 to 264 (PGTLDTGLEE…EVLLGHLQGL (139 aa)). Residues 265–286 (ASTLGNMLAVTFLLQTLVLLGL) traverse the membrane as a helical segment. Over 287–351 (RYLQTALEGL…KPPKECLPEA (65 aa)) the chain is Cytoplasmic. The disordered stretch occupies residues 325–351 (QGAGPHRPAPGETPPEEKPPKECLPEA). The segment covering 339 to 351 (PEEKPPKECLPEA) has biased composition (basic and acidic residues).

This sequence belongs to the PRPH2/ROM1 family. Homodimer; disulfide-linked. Forms a homotetramer. Forms a heterotetramer with PRPH2. Homotetramer and heterotetramer core complexes go on to form higher order complexes by formation of intermolecular disulfide bonds. Interacts with STX3. Interacts with SNAP25. In terms of tissue distribution, retina photoreceptor (at protein level). In rim region of ROS disks (at protein level).

Its subcellular location is the photoreceptor inner segment membrane. The protein localises to the photoreceptor outer segment membrane. Functionally, plays a role in rod outer segment (ROS) morphogenesis. May play a role with PRPH2 in the maintenance of the structure of ROS curved disks. Plays a role in the organization of the ROS and maintenance of ROS disk diameter. Involved in the maintenance of the retina outer nuclear layer. This is Rod outer segment membrane protein 1 (ROM1) from Bos taurus (Bovine).